The chain runs to 374 residues: C-X-C chemokine receptor type 5 (374 aa).

The Extracellular segment spans residues 1-57 (MNYPLTLDMGSITYNMDDLYKELAFYSNSTEIPLQDSNFCSTVEGPLLTSFKAVFMP). The N-linked (GlcNAc...) asparagine glycan is linked to N28. The helical transmembrane segment at 58–78 (VAYSLIFLLGMMGNILVLVIL) threads the bilayer. Residues 79–90 (ERHRHTRSSTET) lie on the Cytoplasmic side of the membrane. A helical membrane pass occupies residues 91–111 (FLFHLAVADLLLVFILPFAVA). The Extracellular segment spans residues 112–126 (EGSVGWVLGTFLCKT). Cysteines 124 and 204 form a disulfide. Residues 127 to 147 (VIALHKINFYCSSLLLACIAV) traverse the membrane as a helical segment. Topologically, residues 148 to 169 (DRYLAIVHAVHAYRRRRLLSIH) are cytoplasmic. A helical membrane pass occupies residues 170 to 190 (ITCTAIWLAGFLFALPELLFA). Residues 191-221 (KVGQPHNNDSLPQCTFSQENEAETRAWFTSR) are Extracellular-facing. N-linked (GlcNAc...) asparagine glycosylation occurs at N198. Residues 222-242 (FLYHIGGFLLPMLVMGWCYVG) form a helical membrane-spanning segment. At 243–261 (VVHRLLQAQRRPQRQKAVR) the chain is on the cytoplasmic side. Residues 262 to 282 (VAILVTSIFFLCWSPYHIVIF) form a helical membrane-spanning segment. Topologically, residues 283–306 (LDTLERLKAVNSSCELSGYLSVAI) are extracellular. Residues 307–327 (TLCEFLGLAHCCLNPMLYTFA) form a helical membrane-spanning segment. Residues 328–374 (GVKFRSDLSRLLTKLGCAGPASLCQLFPNWRKSSLSESENATSLTTF) are Cytoplasmic-facing.

It belongs to the G-protein coupled receptor 1 family. Mainly in spleen, in resting B-cells.

The protein resides in the cell membrane. In terms of biological role, cytokine receptor that binds to B-lymphocyte chemoattractant (BLC). Involved in B-cell migration into B-cell follicles of spleen and Peyer patches but not into those of mesenteric or peripheral lymph nodes. The chain is C-X-C chemokine receptor type 5 (Cxcr5) from Mus musculus (Mouse).